Here is a 281-residue protein sequence, read N- to C-terminus: Bifunctional protein FolD (281 aa).

NADP(+) is bound by residues Gly-167–Ser-169 and Ser-192.

Belongs to the tetrahydrofolate dehydrogenase/cyclohydrolase family. In terms of assembly, homodimer.

The enzyme catalyses (6R)-5,10-methylene-5,6,7,8-tetrahydrofolate + NADP(+) = (6R)-5,10-methenyltetrahydrofolate + NADPH. It catalyses the reaction (6R)-5,10-methenyltetrahydrofolate + H2O = (6R)-10-formyltetrahydrofolate + H(+). The protein operates within one-carbon metabolism; tetrahydrofolate interconversion. Its function is as follows. Catalyzes the oxidation of 5,10-methylenetetrahydrofolate to 5,10-methenyltetrahydrofolate and then the hydrolysis of 5,10-methenyltetrahydrofolate to 10-formyltetrahydrofolate. The polypeptide is Bifunctional protein FolD (Alcanivorax borkumensis (strain ATCC 700651 / DSM 11573 / NCIMB 13689 / SK2)).